A 150-amino-acid polypeptide reads, in one-letter code: Endoribonuclease YbeY (150 aa).

Positions 115, 119, and 125 each coordinate Zn(2+).

This sequence belongs to the endoribonuclease YbeY family. Zn(2+) is required as a cofactor.

Its subcellular location is the cytoplasm. In terms of biological role, single strand-specific metallo-endoribonuclease involved in late-stage 70S ribosome quality control and in maturation of the 3' terminus of the 16S rRNA. In Aquifex aeolicus (strain VF5), this protein is Endoribonuclease YbeY.